A 321-amino-acid chain; its full sequence is Outer envelope protein 36, chloroplastic (321 aa).

Belongs to the OEP80 (TC 1.B.33.2) family. In terms of tissue distribution, expressed in germinating seeds.

It is found in the plastid. Its subcellular location is the chloroplast outer membrane. Functionally, may play a role during plastid development. This is Outer envelope protein 36, chloroplastic from Arabidopsis thaliana (Mouse-ear cress).